Consider the following 140-residue polypeptide: 3-hydroxyacyl-[acyl-carrier-protein] dehydratase FabZ (140 aa).

Histidine 47 is a catalytic residue.

The protein belongs to the thioester dehydratase family. FabZ subfamily.

Its subcellular location is the cytoplasm. The enzyme catalyses a (3R)-hydroxyacyl-[ACP] = a (2E)-enoyl-[ACP] + H2O. Functionally, involved in unsaturated fatty acids biosynthesis. Catalyzes the dehydration of short chain beta-hydroxyacyl-ACPs and long chain saturated and unsaturated beta-hydroxyacyl-ACPs. In Streptococcus gordonii (strain Challis / ATCC 35105 / BCRC 15272 / CH1 / DL1 / V288), this protein is 3-hydroxyacyl-[acyl-carrier-protein] dehydratase FabZ.